Reading from the N-terminus, the 284-residue chain is Phosphate import ATP-binding protein PstB 2 (284 aa).

Polar residues predominate over residues 1-22 (MTLLSTLRGISSPARQQPGTQS). The tract at residues 1–29 (MTLLSTLRGISSPARQQPGTQSESRRGGD) is disordered. Positions 36–278 (LAVAGVSHGF…PDDARARKFI (243 aa)) constitute an ABC transporter domain. Position 68–75 (68–75 (GPSGTGKT)) interacts with ATP.

The protein belongs to the ABC transporter superfamily. Phosphate importer (TC 3.A.1.7) family. As to quaternary structure, the complex is composed of two ATP-binding proteins (PstB), two transmembrane proteins (PstC and PstA) and a solute-binding protein (PstS).

Its subcellular location is the cell membrane. The catalysed reaction is phosphate(out) + ATP + H2O = ADP + 2 phosphate(in) + H(+). Part of the ABC transporter complex PstSACB involved in phosphate import. Responsible for energy coupling to the transport system. The sequence is that of Phosphate import ATP-binding protein PstB 2 from Natronomonas pharaonis (strain ATCC 35678 / DSM 2160 / CIP 103997 / JCM 8858 / NBRC 14720 / NCIMB 2260 / Gabara) (Halobacterium pharaonis).